The chain runs to 102 residues: ATP-dependent Clp protease adapter protein ClpS (102 aa).

This sequence belongs to the ClpS family. As to quaternary structure, binds to the N-terminal domain of the chaperone ClpA.

Its function is as follows. Involved in the modulation of the specificity of the ClpAP-mediated ATP-dependent protein degradation. The polypeptide is ATP-dependent Clp protease adapter protein ClpS (Nitrosospira multiformis (strain ATCC 25196 / NCIMB 11849 / C 71)).